A 597-amino-acid polypeptide reads, in one-letter code: Elongation factor 4 (597 aa).

The 183-residue stretch at Lys2–Glu184 folds into the tr-type G domain. GTP contacts are provided by residues Asp14–Thr19 and Asn131–Asp134.

It belongs to the TRAFAC class translation factor GTPase superfamily. Classic translation factor GTPase family. LepA subfamily.

The protein localises to the cell inner membrane. The catalysed reaction is GTP + H2O = GDP + phosphate + H(+). Functionally, required for accurate and efficient protein synthesis under certain stress conditions. May act as a fidelity factor of the translation reaction, by catalyzing a one-codon backward translocation of tRNAs on improperly translocated ribosomes. Back-translocation proceeds from a post-translocation (POST) complex to a pre-translocation (PRE) complex, thus giving elongation factor G a second chance to translocate the tRNAs correctly. Binds to ribosomes in a GTP-dependent manner. In Vibrio campbellii (strain ATCC BAA-1116), this protein is Elongation factor 4.